The sequence spans 437 residues: MADDPSAADRNVEIWKIKKLIKSLEAARGNGTSMISLIIPPKDQISRVAKMLADEFGTASNIKSRVNRLSVLGAITSVQQRLKLYNKVPPNGLVVYCGTIVTEEGKEKKVNIDFEPFKPINTSLYLCDNKFHTEALTALLSDDSKFGFIVIDGSGALFGTLQGNTREVLHKFTVDLPKKHGRGGQSALRFARLRMEKRHNYVRKVAETAVQLFISGDKVNVAGLVLAGSADFKTELSQSDMFDQRLQSKVLKLVDISYGGENGFNQAIELSTEVLSNVKFIQEKKLIGRYFDEISQDTGKYCFGVEDTLKALEMGAVEILIVYENLDIMRYVLHCQGTEEEKILYLTPEQEKDKSHFTDKETGQEHELIESMPLLEWFANNYKKFGATLEIVTDKSQEGSQFVKGFGGIGGILRYRVDFQGMEYQGGDDEFFDLDDY.

Ala2 carries the N-acetylalanine modification. Residues Asn61 to Ser64 carry the NIKS motif; plays an important role in translational termination motif. Lys63 bears the 4-hydroxylysine mark. A Glycyl lysine isopeptide (Lys-Gly) (interchain with G-Cter in SUMO2) cross-link involves residue Lys87. An N5-methylglutamine modification is found at Gln185. A Glycyl lysine isopeptide (Lys-Gly) (interchain with G-Cter in ubiquitin) cross-link involves residue Lys279. Residue Thr347 is modified to Phosphothreonine. A Glycyl lysine isopeptide (Lys-Gly) (interchain with G-Cter in SUMO2) cross-link involves residue Lys404.

Belongs to the eukaryotic release factor 1 family. In terms of assembly, component of the eRF1-eRF3-GTP ternary complex, composed of ETF1/ERF1 and eRF3 (GSPT1/ERF3A or GSPT2/ERF3B) and GTP. Component of the transient SURF (SMG1-UPF1-eRF1-eRF3) complex. Interacts with JMJD4. The ETF1-GSPT1 complex interacts with JMJD4. Post-translationally, hydroxylation at Lys-63 by JMJD4 promotes its translational termination efficiency. In terms of processing, methylated at Gln-185 by N6AMT1. Ubiquitinated at Lys-279 via 'Lys-6'-linked polyubiquitin chains by RNF14 and RNF25 in response to ribosome collisions (ribosome stalling), leading to its degradation by the proteasome and rescue of stalled ribosomes.

The protein localises to the cytoplasm. Its function is as follows. Component of the eRF1-eRF3-GTP ternary complex, a ternary complex that mediates translation termination in response to the termination codons. The eRF1-eRF3-GTP complex binds to a stop codon in the ribosomal A-site. ETF1/ERF1 is responsible for stop codon recognition and inducing hydrolysis of peptidyl-tRNA. Following GTP hydrolysis, eRF3 (GSPT1/ERF3A or GSPT2/ERF3B) dissociates, permitting ETF1/eRF1 to accommodate fully in the A-site, followed by hydrolysis of peptidyl-tRNA. Component of the transient SURF complex which recruits UPF1 to stalled ribosomes in the context of nonsense-mediated decay (NMD) of mRNAs containing premature stop codons. Required for SHFL-mediated translation termination which inhibits programmed ribosomal frameshifting (-1PRF) of mRNA from viruses and cellular genes. This chain is Eukaryotic peptide chain release factor subunit 1 (ETF1), found in Bos taurus (Bovine).